Here is a 359-residue protein sequence, read N- to C-terminus: 4-hydroxy-3-methylbut-2-en-1-yl diphosphate synthase (flavodoxin) (359 aa).

[4Fe-4S] cluster contacts are provided by Cys264, Cys267, Cys299, and Glu306.

Belongs to the IspG family. [4Fe-4S] cluster is required as a cofactor.

The enzyme catalyses (2E)-4-hydroxy-3-methylbut-2-enyl diphosphate + oxidized [flavodoxin] + H2O + 2 H(+) = 2-C-methyl-D-erythritol 2,4-cyclic diphosphate + reduced [flavodoxin]. The protein operates within isoprenoid biosynthesis; isopentenyl diphosphate biosynthesis via DXP pathway; isopentenyl diphosphate from 1-deoxy-D-xylulose 5-phosphate: step 5/6. Converts 2C-methyl-D-erythritol 2,4-cyclodiphosphate (ME-2,4cPP) into 1-hydroxy-2-methyl-2-(E)-butenyl 4-diphosphate. This is 4-hydroxy-3-methylbut-2-en-1-yl diphosphate synthase (flavodoxin) from Helicobacter pylori (strain P12).